Consider the following 94-residue polypeptide: MRIEVIRREENLLEFYLEGEDHTFANLLTETLHENEHVTFAGYTIEHPITMARKPRFKVVTDGKITPEKALEEAAQKIFDRAREVLEAWKAAIE.

The protein belongs to the archaeal Rpo11/eukaryotic RPB11/RPC19 RNA polymerase subunit family. Part of the RNA polymerase complex.

Its subcellular location is the cytoplasm. It catalyses the reaction RNA(n) + a ribonucleoside 5'-triphosphate = RNA(n+1) + diphosphate. In terms of biological role, DNA-dependent RNA polymerase (RNAP) catalyzes the transcription of DNA into RNA using the four ribonucleoside triphosphates as substrates. The polypeptide is DNA-directed RNA polymerase subunit Rpo11 (Thermococcus kodakarensis (strain ATCC BAA-918 / JCM 12380 / KOD1) (Pyrococcus kodakaraensis (strain KOD1))).